The following is a 173-amino-acid chain: Archaemetzincin (173 aa).

Residue His-130 coordinates Zn(2+). The active-site Proton acceptor is Glu-131. Residues His-134, His-140, Cys-141, Cys-146, Cys-165, and Cys-168 each coordinate Zn(2+).

This sequence belongs to the peptidase M54 family. In terms of assembly, monomer. The cofactor is Zn(2+).

Its function is as follows. Probable zinc metalloprotease whose natural substrate is unknown. The chain is Archaemetzincin from Haloarcula marismortui (strain ATCC 43049 / DSM 3752 / JCM 8966 / VKM B-1809) (Halobacterium marismortui).